We begin with the raw amino-acid sequence, 192 residues long: GTP cyclohydrolase-2 (192 aa).

50-54 (RLHSE) is a GTP binding site. Residues Cys55, Cys66, and Cys68 each coordinate Zn(2+). GTP contacts are provided by residues 92–94 (EGR) and Thr114. The active-site Proton acceptor is the Asp126. Arg128 acts as the Nucleophile in catalysis. 2 residues coordinate GTP: Thr149 and Lys154.

It belongs to the GTP cyclohydrolase II family. It depends on Zn(2+) as a cofactor.

The enzyme catalyses GTP + 4 H2O = 2,5-diamino-6-hydroxy-4-(5-phosphoribosylamino)-pyrimidine + formate + 2 phosphate + 3 H(+). The protein operates within cofactor biosynthesis; riboflavin biosynthesis; 5-amino-6-(D-ribitylamino)uracil from GTP: step 1/4. Functionally, catalyzes the conversion of GTP to 2,5-diamino-6-ribosylamino-4(3H)-pyrimidinone 5'-phosphate (DARP), formate and pyrophosphate. The protein is GTP cyclohydrolase-2 of Helicobacter pylori (strain Shi470).